The sequence spans 179 residues: Bifunctional protein PyrR (179 aa).

The PRPP-binding motif lies at 99–111; the sequence is VILVDDVLYTGRT.

It belongs to the purine/pyrimidine phosphoribosyltransferase family. PyrR subfamily. Homodimer and homohexamer; in equilibrium.

It carries out the reaction UMP + diphosphate = 5-phospho-alpha-D-ribose 1-diphosphate + uracil. Regulates transcriptional attenuation of the pyrimidine nucleotide (pyr) operon by binding in a uridine-dependent manner to specific sites on pyr mRNA. This disrupts an antiterminator hairpin in the RNA and favors formation of a downstream transcription terminator, leading to a reduced expression of downstream genes. Functionally, also displays a weak uracil phosphoribosyltransferase activity which is not physiologically significant. The polypeptide is Bifunctional protein PyrR (Brevibacillus brevis (strain 47 / JCM 6285 / NBRC 100599)).